Here is a 341-residue protein sequence, read N- to C-terminus: Platelet-activating factor receptor (341 aa).

Residues 1-16 lie on the Extracellular side of the membrane; the sequence is MEQNGSFRVDSEFRYT. Asn-4 carries N-linked (GlcNAc...) asparagine glycosylation. The helical transmembrane segment at 17 to 38 threads the bilayer; that stretch reads LFPIVYSVIFVLGVVANGYVLW. At 39-54 the chain is on the cytoplasmic side; the sequence is VFATLYPSKKLNEIKI. A helical membrane pass occupies residues 55–74; it reads FMVNLTVADLLFLMTLPLWI. Over 75-91 the chain is Extracellular; sequence VYYSNEGDWIVHKFLCN. A disulfide bridge connects residues Cys-90 and Cys-173. The chain crosses the membrane as a helical span at residues 92–113; the sequence is LAGCLFFINTYCSVAFLGVITY. The Cytoplasmic portion of the chain corresponds to 114–133; the sequence is NRYQAVAYPIKTAQATTRKR. A helical transmembrane segment spans residues 134–155; the sequence is GITLSLVIWISIAATASYFLAT. Topologically, residues 156–184 are extracellular; sequence DSTNVVPKKDGSGNITRCFEHYEPYSVPI. The N-linked (GlcNAc...) asparagine glycan is linked to Asn-169. Residues 185–205 form a helical membrane-spanning segment; sequence LVVHIFITSCFFLVFFLIFYC. Residues 206–233 are Cytoplasmic-facing; the sequence is NMVIIHTLLTRPVRQQRKPEVKRRALWM. Residues 234–254 traverse the membrane as a helical segment; sequence VCTVLAVFVICFVPHHVVQLP. The Extracellular segment spans residues 255–275; the sequence is WTLAELGYQTNFHQAINDAHQ. The chain crosses the membrane as a helical span at residues 276 to 295; that stretch reads ITLCLLSTNCVLDPVIYCFL. At 296-341 the chain is on the cytoplasmic side; sequence TKKFRKHLSEKFYSMRSSRKCSRATSDTCTEVMMPANQTPVLPLKN.

This sequence belongs to the G-protein coupled receptor 1 family. Interacts with ARRB1. Present in almost all organs including spleen, small intestine, kidney, lung, liver and brain.

It localises to the cell membrane. In terms of biological role, receptor for platelet activating factor, a chemotactic phospholipid mediator that possesses potent inflammatory, smooth-muscle contractile and hypotensive activity. Seems to mediate its action via a G protein that activates a phosphatidylinositol-calcium second messenger system. The sequence is that of Platelet-activating factor receptor (Ptafr) from Rattus norvegicus (Rat).